The primary structure comprises 974 residues: Ovochymase-2 (974 aa).

Positions 1 to 21 (MAETSIFPIMMLTVMIGVGRG) are cleaved as a signal peptide. Positions 22–49 (VTDSPGRVSRCGERPAANTSVSYGLLSR) are cleaved as a propeptide — activation peptide. N-linked (GlcNAc...) asparagine glycosylation is present at Asn39. The region spanning 50–299 (IVGGTSAVKG…LLNWLSENLN (250 aa)) is the Peptidase S1 1 domain. A disulfide bond links Cys75 and Cys91. The Charge relay system role is filled by His90. 2 residues coordinate Ca(2+): Val112 and Glu117. Asp140 acts as the Charge relay system in catalysis. 11 disulfide bridges follow: Cys174/Cys244, Cys205/Cys223, Cys234/Cys263, Cys312/Cys342, Cys369/Cys388, Cys435/Cys462, Cys489/Cys510, Cys615/Cys631, Cys713/Cys776, Cys741/Cys754, and Cys766/Cys795. Ser238 serves as the catalytic Charge relay system. 2 consecutive CUB domains span residues 312–425 (CSTN…YEAV) and 435–547 (CGSV…ISFV). In terms of domain architecture, Peptidase S1 2 spans 590–819 (LIKAEEAMPN…FIPWIMETIL (230 aa)). Residues 590–974 (LIKAEEAMPN…WLSYSFHNQN (385 aa)) constitute a propeptide, activation peptide. A glycan (N-linked (GlcNAc...) asparagine) is linked at Asn763. The segment at 830–858 (EPHHPLFPPDKPSQQKALLPDSPPSSSSQ) is disordered. N-linked (GlcNAc...) asparagine glycosylation occurs at Asn926.

The protein belongs to the peptidase S1 family. In terms of processing, the catalytically inactive 107 kDa form is processed both N- and C-terminally to give rise to the 66 kDa catalytically active form and inactive forms of 82 kDa and 59 kDa. As to expression, expressed specifically in the cells lining the bottom of epithelial folds in the oviductal pars recta.

The protein localises to the secreted. It catalyses the reaction Preferential cleavage at 371-Gly-Ser-Arg-|-Trp-374 of glycoprotein gp43 in Xenopus laevis coelemic egg envelope to yield gp41.. Functionally, mediates gamete interaction by affecting the vitelline coat. This Bufo japonicus (Japanese common toad) protein is Ovochymase-2 (OVCH2).